Here is a 142-residue protein sequence, read N- to C-terminus: DNA-directed RNA polymerase subunit omega (142 aa).

The tract at residues 93–142 is disordered; that stretch reads AWSVPEAGGDEGGDASELLDDEGEGAAAGAEPDFSEMDVPLADLADEDKI. The span at 100-116 shows a compositional bias: acidic residues; that stretch reads GGDEGGDASELLDDEGE.

It belongs to the RNA polymerase subunit omega family. The RNAP catalytic core consists of 2 alpha, 1 beta, 1 beta' and 1 omega subunit. When a sigma factor is associated with the core the holoenzyme is formed, which can initiate transcription.

The catalysed reaction is RNA(n) + a ribonucleoside 5'-triphosphate = RNA(n+1) + diphosphate. In terms of biological role, promotes RNA polymerase assembly. Latches the N- and C-terminal regions of the beta' subunit thereby facilitating its interaction with the beta and alpha subunits. This Rhodospirillum centenum (strain ATCC 51521 / SW) protein is DNA-directed RNA polymerase subunit omega.